Reading from the N-terminus, the 164-residue chain is UPF0225 protein Shewmr7_1921 (164 aa).

The protein belongs to the UPF0225 family.

The polypeptide is UPF0225 protein Shewmr7_1921 (Shewanella sp. (strain MR-7)).